The sequence spans 214 residues: UPF0056 membrane protein aq_540 (214 aa).

6 consecutive transmembrane segments (helical) span residues 17 to 37 (FLSLLAIMNPFSSVPVVISLM), 47 to 67 (VIALKASVYAFFILTFFLISG), 73 to 93 (FMGITLPAFKVGGGILLFLIA), 122 to 142 (LIPLAMPLLAGPGSITTVLVL), 153 to 173 (VALFCAIFLSSFTAFVVYSLS), and 185 to 205 (INLITRISGILLLAISVQFVV).

This sequence belongs to the UPF0056 (MarC) family.

It localises to the cell membrane. This chain is UPF0056 membrane protein aq_540, found in Aquifex aeolicus (strain VF5).